A 445-amino-acid chain; its full sequence is Tubulin beta-2B chain (445 aa).

An MREI motif motif is present at residues 1–4; that stretch reads MREI. Gln11 is a binding site for GTP. A Phosphoserine modification is found at Ser40. Thr55 carries the phosphothreonine modification. Lys58 carries the N6-acetyllysine; alternate modification. Lys58 bears the N6-succinyllysine; alternate mark. Lys58 is covalently cross-linked (Glycyl lysine isopeptide (Lys-Gly) (interchain with G-Cter in ubiquitin); alternate). Positions 69, 138, 142, 143, and 144 each coordinate GTP. Glu69 provides a ligand contact to Mg(2+). The residue at position 172 (Ser172) is a Phosphoserine; by CDK1. The GTP site is built by Asn204 and Asn226. Thr285 and Thr290 each carry phosphothreonine. Omega-N-methylarginine is present on Arg318. Lys324 participates in a covalent cross-link: Glycyl lysine isopeptide (Lys-Gly) (interchain with G-Cter in ubiquitin). Residues 422-445 form a disordered region; the sequence is YQQYQDATADEQGEFEEEEGEDEA. Residues 429–445 are compositionally biased toward acidic residues; that stretch reads TADEQGEFEEEEGEDEA. The residue at position 438 (Glu438) is a 5-glutamyl polyglutamate.

Belongs to the tubulin family. Dimer of alpha and beta chains. A typical microtubule is a hollow water-filled tube with an outer diameter of 25 nm and an inner diameter of 15 nM. Alpha-beta heterodimers associate head-to-tail to form protofilaments running lengthwise along the microtubule wall with the beta-tubulin subunit facing the microtubule plus end conferring a structural polarity. Microtubules usually have 13 protofilaments but different protofilament numbers can be found in some organisms and specialized cells. Mg(2+) is required as a cofactor. In terms of processing, some glutamate residues at the C-terminus are polyglycylated, resulting in polyglycine chains on the gamma-carboxyl group. Glycylation is mainly limited to tubulin incorporated into axonemes (cilia and flagella) whereas glutamylation is prevalent in neuronal cells, centrioles, axonemes, and the mitotic spindle. Both modifications can coexist on the same protein on adjacent residues, and lowering polyglycylation levels increases polyglutamylation, and reciprocally. The precise function of polyglycylation is still unclear. Post-translationally, some glutamate residues at the C-terminus are polyglutamylated, resulting in polyglutamate chains on the gamma-carboxyl group. Polyglutamylation plays a key role in microtubule severing by spastin (SPAST). SPAST preferentially recognizes and acts on microtubules decorated with short polyglutamate tails: severing activity by SPAST increases as the number of glutamates per tubulin rises from one to eight, but decreases beyond this glutamylation threshold. Phosphorylated on Ser-172 by CDK1 during the cell cycle, from metaphase to telophase, but not in interphase. This phosphorylation inhibits tubulin incorporation into microtubules.

The protein localises to the cytoplasm. It localises to the cytoskeleton. In terms of biological role, tubulin is the major constituent of microtubules, a cylinder consisting of laterally associated linear protofilaments composed of alpha- and beta-tubulin heterodimers. Microtubules grow by the addition of GTP-tubulin dimers to the microtubule end, where a stabilizing cap forms. Below the cap, tubulin dimers are in GDP-bound state, owing to GTPase activity of alpha-tubulin. Implicated in neuronal migration. The chain is Tubulin beta-2B chain (TUBB2B) from Bos taurus (Bovine).